A 209-amino-acid polypeptide reads, in one-letter code: Large ribosomal subunit protein uL3 (209 aa).

Gln-150 carries the post-translational modification N5-methylglutamine.

It belongs to the universal ribosomal protein uL3 family. Part of the 50S ribosomal subunit. Forms a cluster with proteins L14 and L19. Post-translationally, methylated by PrmB.

Functionally, one of the primary rRNA binding proteins, it binds directly near the 3'-end of the 23S rRNA, where it nucleates assembly of the 50S subunit. The polypeptide is Large ribosomal subunit protein uL3 (Aliivibrio fischeri (strain MJ11) (Vibrio fischeri)).